Here is a 399-residue protein sequence, read N- to C-terminus: 4-hydroxy-3-methylbut-2-enyl diphosphate reductase (399 aa).

Cys-66 serves as a coordination point for [4Fe-4S] cluster. Residue His-96 coordinates (2E)-4-hydroxy-3-methylbut-2-enyl diphosphate. Dimethylallyl diphosphate is bound at residue His-96. His-96 is a binding site for isopentenyl diphosphate. Residue Cys-157 participates in [4Fe-4S] cluster binding. Residue His-185 participates in (2E)-4-hydroxy-3-methylbut-2-enyl diphosphate binding. His-185 is a binding site for dimethylallyl diphosphate. An isopentenyl diphosphate-binding site is contributed by His-185. Glu-187 acts as the Proton donor in catalysis. Thr-250 is a binding site for (2E)-4-hydroxy-3-methylbut-2-enyl diphosphate. Cys-288 is a [4Fe-4S] cluster binding site. Residues Ser-317, Ser-318, Asn-319, and Ser-380 each contribute to the (2E)-4-hydroxy-3-methylbut-2-enyl diphosphate site. The dimethylallyl diphosphate site is built by Ser-317, Ser-318, Asn-319, and Ser-380. Isopentenyl diphosphate contacts are provided by Ser-317, Ser-318, Asn-319, and Ser-380.

The protein belongs to the IspH family. [4Fe-4S] cluster is required as a cofactor.

The enzyme catalyses isopentenyl diphosphate + 2 oxidized [2Fe-2S]-[ferredoxin] + H2O = (2E)-4-hydroxy-3-methylbut-2-enyl diphosphate + 2 reduced [2Fe-2S]-[ferredoxin] + 2 H(+). It carries out the reaction dimethylallyl diphosphate + 2 oxidized [2Fe-2S]-[ferredoxin] + H2O = (2E)-4-hydroxy-3-methylbut-2-enyl diphosphate + 2 reduced [2Fe-2S]-[ferredoxin] + 2 H(+). It functions in the pathway isoprenoid biosynthesis; dimethylallyl diphosphate biosynthesis; dimethylallyl diphosphate from (2E)-4-hydroxy-3-methylbutenyl diphosphate: step 1/1. It participates in isoprenoid biosynthesis; isopentenyl diphosphate biosynthesis via DXP pathway; isopentenyl diphosphate from 1-deoxy-D-xylulose 5-phosphate: step 6/6. Catalyzes the conversion of 1-hydroxy-2-methyl-2-(E)-butenyl 4-diphosphate (HMBPP) into a mixture of isopentenyl diphosphate (IPP) and dimethylallyl diphosphate (DMAPP). Acts in the terminal step of the DOXP/MEP pathway for isoprenoid precursor biosynthesis. This chain is 4-hydroxy-3-methylbut-2-enyl diphosphate reductase, found in Synechococcus sp. (strain CC9902).